A 158-amino-acid polypeptide reads, in one-letter code: NAD(P)H-quinone oxidoreductase subunit N (158 aa).

Belongs to the complex I NdhN subunit family. NDH-1 can be composed of about 15 different subunits; different subcomplexes with different compositions have been identified which probably have different functions.

Its subcellular location is the cellular thylakoid membrane. The enzyme catalyses a plastoquinone + NADH + (n+1) H(+)(in) = a plastoquinol + NAD(+) + n H(+)(out). It carries out the reaction a plastoquinone + NADPH + (n+1) H(+)(in) = a plastoquinol + NADP(+) + n H(+)(out). NDH-1 shuttles electrons from an unknown electron donor, via FMN and iron-sulfur (Fe-S) centers, to quinones in the respiratory and/or the photosynthetic chain. The immediate electron acceptor for the enzyme in this species is believed to be plastoquinone. Couples the redox reaction to proton translocation, and thus conserves the redox energy in a proton gradient. Cyanobacterial NDH-1 also plays a role in inorganic carbon-concentration. The sequence is that of NAD(P)H-quinone oxidoreductase subunit N from Microcystis aeruginosa (strain NIES-843 / IAM M-2473).